The sequence spans 293 residues: Ribosomal RNA small subunit methyltransferase H (293 aa).

S-adenosyl-L-methionine is bound by residues 34–36, Asp54, Leu86, Asp101, and Gln108; that span reads GGH.

It belongs to the methyltransferase superfamily. RsmH family.

The protein resides in the cytoplasm. The catalysed reaction is cytidine(1402) in 16S rRNA + S-adenosyl-L-methionine = N(4)-methylcytidine(1402) in 16S rRNA + S-adenosyl-L-homocysteine + H(+). Functionally, specifically methylates the N4 position of cytidine in position 1402 (C1402) of 16S rRNA. The chain is Ribosomal RNA small subunit methyltransferase H from Elusimicrobium minutum (strain Pei191).